A 51-amino-acid chain; its full sequence is Defensin (51 aa).

3 disulfide bridges follow: Cys3/Cys31, Cys17/Cys36, and Cys21/Cys38. Phe51 bears the Phenylalanine amide mark.

It localises to the secreted. Its function is as follows. Antibacterial peptide against Gram-positive and Gram-negative bacteria and fungi. The protein is Defensin of Bombus pascuorum (Common carder bumblebee).